A 292-amino-acid chain; its full sequence is Diaminopimelate epimerase (292 aa).

Asn-13, Gln-46, and Asn-66 together coordinate substrate. The Proton donor role is filled by Cys-75. Residues 76–77 (GN), Asn-166, Asn-199, and 217–218 (ER) contribute to the substrate site. The active-site Proton acceptor is the Cys-226. Position 227 to 228 (227 to 228 (GT)) interacts with substrate.

It belongs to the diaminopimelate epimerase family. Homodimer.

It localises to the cytoplasm. It carries out the reaction (2S,6S)-2,6-diaminopimelate = meso-2,6-diaminopimelate. It participates in amino-acid biosynthesis; L-lysine biosynthesis via DAP pathway; DL-2,6-diaminopimelate from LL-2,6-diaminopimelate: step 1/1. Catalyzes the stereoinversion of LL-2,6-diaminopimelate (L,L-DAP) to meso-diaminopimelate (meso-DAP), a precursor of L-lysine and an essential component of the bacterial peptidoglycan. In Ralstonia nicotianae (strain ATCC BAA-1114 / GMI1000) (Ralstonia solanacearum), this protein is Diaminopimelate epimerase.